Here is a 635-residue protein sequence, read N- to C-terminus: Chaperone protein DnaK (635 aa).

Threonine 198 carries the phosphothreonine; by autocatalysis modification. The segment at 597 to 635 is disordered; the sequence is LYEQDQANNERHDTPETEKAEGDNVVDAEFQEIDDQDKK. The segment covering 604-618 has biased composition (basic and acidic residues); it reads NNERHDTPETEKAEG. A compositionally biased stretch (acidic residues) spans 620 to 635; it reads NVVDAEFQEIDDQDKK.

Belongs to the heat shock protein 70 family.

Its function is as follows. Acts as a chaperone. The protein is Chaperone protein DnaK of Zymomonas mobilis subsp. mobilis (strain ATCC 31821 / ZM4 / CP4).